A 123-amino-acid chain; its full sequence is EVKLVESGGGLVQPGGSLRLSCATSGFTFSAFYMEWVRQPPGKRLEWIAASRNKANDYTTEYSASVKGRFFVSRDTSQSILYLQMNALRAEDTAIYYCARDVYYGYDYWFDVWGAGTTVTVSS.

The 114-residue stretch at 1–114 (EVKLVESGGG…GYDYWFDVWG (114 aa)) folds into the Ig-like domain.

The sequence is that of Ig heavy chain V region HPCG14 from Mus musculus (Mouse).